A 57-amino-acid chain; its full sequence is MAGKKGSSPNVYAYFKVDGDKVSRIKKVCSRCGKGTYMSEHKDRNTCGKCGLTEFKQ.

Residues Cys29, Cys32, Cys47, and Cys50 each coordinate Zn(2+). Residues 29 to 50 form a C4-type zinc finger; that stretch reads CSRCGKGTYMSEHKDRNTCGKC.

It belongs to the eukaryotic ribosomal protein eS31 family. Part of the 30S ribosomal subunit. Zn(2+) serves as cofactor.

The sequence is that of Small ribosomal subunit protein eS31 from Nitrosopumilus maritimus (strain SCM1).